We begin with the raw amino-acid sequence, 244 residues long: uncharacterized protein (244 aa).

The N-terminal stretch at 1-19 (MRGIFFLILILNFIGLIFS) is a signal peptide. Asn45 and Asn77 each carry an N-linked (GlcNAc...) asparagine glycan. 2 ShKT domains span residues 67–105 (CNNP…CGKC) and 113–149 (CSDK…CNRC). 3 cysteine pairs are disulfide-bonded: Cys113-Cys149, Cys122-Cys142, and Cys129-Cys146. N-linked (GlcNAc...) asparagine glycans are attached at residues Asn152 and Asn158. ShKT domains are found at residues 171–205 (CTDL…CNAC) and 208–243 (CEDA…CNIC). Intrachain disulfides connect Cys171–Cys205, Cys178–Cys198, Cys185–Cys202, Cys208–Cys243, Cys215–Cys236, and Cys224–Cys240.

This is an uncharacterized protein from Caenorhabditis elegans.